Reading from the N-terminus, the 96-residue chain is Co-chaperonin GroES (96 aa).

This sequence belongs to the GroES chaperonin family. Heptamer of 7 subunits arranged in a ring. Interacts with the chaperonin GroEL.

The protein localises to the cytoplasm. Functionally, together with the chaperonin GroEL, plays an essential role in assisting protein folding. The GroEL-GroES system forms a nano-cage that allows encapsulation of the non-native substrate proteins and provides a physical environment optimized to promote and accelerate protein folding. GroES binds to the apical surface of the GroEL ring, thereby capping the opening of the GroEL channel. This Myxococcus xanthus (strain DK1622) protein is Co-chaperonin GroES.